Here is a 134-residue protein sequence, read N- to C-terminus: Putative nickel-responsive regulator (134 aa).

Ni(2+) contacts are provided by His78, His89, His91, and Cys97.

This sequence belongs to the transcriptional regulatory CopG/NikR family. Ni(2+) serves as cofactor.

In terms of biological role, transcriptional regulator. The protein is Putative nickel-responsive regulator of Chlorobium limicola (strain DSM 245 / NBRC 103803 / 6330).